Here is a 117-residue protein sequence, read N- to C-terminus: Large ribosomal subunit protein bL19 (117 aa).

The protein belongs to the bacterial ribosomal protein bL19 family.

Functionally, this protein is located at the 30S-50S ribosomal subunit interface and may play a role in the structure and function of the aminoacyl-tRNA binding site. This Sorangium cellulosum (strain So ce56) (Polyangium cellulosum (strain So ce56)) protein is Large ribosomal subunit protein bL19.